We begin with the raw amino-acid sequence, 411 residues long: Phospholipase A1-II 6 (411 aa).

The active-site Acyl-ester intermediate is the Ser-226. Active-site charge relay system residues include Ser-226, Asp-296, and His-334.

Belongs to the AB hydrolase superfamily. Lipase family.

It localises to the cytoplasm. In terms of biological role, acylhydrolase that catalyzes the hydrolysis of phospholipids at the sn-1 position. The polypeptide is Phospholipase A1-II 6 (Oryza sativa subsp. japonica (Rice)).